A 229-amino-acid polypeptide reads, in one-letter code: Probable calcium-binding protein CML22 (229 aa).

EF-hand domains follow at residues 53 to 88, 89 to 124, 145 to 180, and 184 to 219; these read EGLRNIRSVFESYDNDTNGTIDIEELKKCLEELKLS, LSDEEVKGLYSWCDVDGSKGIQFNEFIVLLCLIYLL, SIFDPIVEVFLFLDKDGKGKLNKADVIKTLNNEDYP, and SPSHVTNMRFEEMDWGRKGKVGFREFLFAFMSWVGL. Positions 66, 68, 70, 72, and 77 each coordinate Ca(2+).

In terms of biological role, potential calcium sensor. The polypeptide is Probable calcium-binding protein CML22 (CML22) (Arabidopsis thaliana (Mouse-ear cress)).